The sequence spans 71 residues: uncharacterized protein (71 aa).

This is an uncharacterized protein from Bacillus phage SPP1 (Bacteriophage SPP1).